The chain runs to 296 residues: tRNA dimethylallyltransferase (296 aa).

19–26 (GPTASGKS) contributes to the ATP binding site. 21-26 (TASGKS) serves as a coordination point for substrate.

Belongs to the IPP transferase family. In terms of assembly, monomer. The cofactor is Mg(2+).

The catalysed reaction is adenosine(37) in tRNA + dimethylallyl diphosphate = N(6)-dimethylallyladenosine(37) in tRNA + diphosphate. Functionally, catalyzes the transfer of a dimethylallyl group onto the adenine at position 37 in tRNAs that read codons beginning with uridine, leading to the formation of N6-(dimethylallyl)adenosine (i(6)A). The polypeptide is tRNA dimethylallyltransferase (Dinoroseobacter shibae (strain DSM 16493 / NCIMB 14021 / DFL 12)).